A 135-amino-acid chain; its full sequence is L-alanine exporter AlaE (135 aa).

3 consecutive transmembrane segments (helical) span residues 9 to 29, 75 to 95, and 96 to 116; these read VATV…IAGM, DILA…LIAG, and ASFA…ILLA.

The protein belongs to the AlaE exporter family.

Its subcellular location is the cell inner membrane. Its function is as follows. Exports L-alanine. The sequence is that of L-alanine exporter AlaE from Cereibacter sphaeroides (strain ATCC 17023 / DSM 158 / JCM 6121 / CCUG 31486 / LMG 2827 / NBRC 12203 / NCIMB 8253 / ATH 2.4.1.) (Rhodobacter sphaeroides).